Consider the following 189-residue polypeptide: Lipid A acyltransferase PagP (189 aa).

The signal sequence occupies residues 1 to 23; it reads MKLKSVLYLLMLLNCLGLKSAHA. Residues His61, Asp104, and Ser105 contribute to the active site.

Belongs to the lipid A palmitoyltransferase family. As to quaternary structure, homodimer.

It is found in the cell outer membrane. It carries out the reaction a lipid A + a 1,2-diacyl-sn-glycero-3-phosphocholine = a hepta-acyl lipid A + a 2-acyl-sn-glycero-3-phosphocholine. It catalyses the reaction a lipid IVA + a 1,2-diacyl-sn-glycero-3-phosphocholine = a lipid IVB + a 2-acyl-sn-glycero-3-phosphocholine. The catalysed reaction is a lipid IIA + a 1,2-diacyl-sn-glycero-3-phosphocholine = a lipid IIB + a 2-acyl-sn-glycero-3-phosphocholine. In terms of biological role, transfers a fatty acid residue from the sn-1 position of a phospholipid to the N-linked hydroxyfatty acid chain on the proximal unit of lipid A or its precursors. The protein is Lipid A acyltransferase PagP of Erwinia amylovora (strain ATCC 49946 / CCPPB 0273 / Ea273 / 27-3).